We begin with the raw amino-acid sequence, 208 residues long: Orotidine 5'-phosphate decarboxylase (208 aa).

Substrate-binding positions include Asp7, Lys29, 57–66 (DLKLADIPNT), Ser109, 162–172 (PGIGAQGGKAK), Gly185, and Arg186. Lys59 serves as the catalytic Proton donor.

It belongs to the OMP decarboxylase family. Type 1 subfamily. In terms of assembly, homodimer.

It catalyses the reaction orotidine 5'-phosphate + H(+) = UMP + CO2. It participates in pyrimidine metabolism; UMP biosynthesis via de novo pathway; UMP from orotate: step 2/2. In terms of biological role, catalyzes the decarboxylation of orotidine 5'-monophosphate (OMP) to uridine 5'-monophosphate (UMP). In Pyrococcus horikoshii (strain ATCC 700860 / DSM 12428 / JCM 9974 / NBRC 100139 / OT-3), this protein is Orotidine 5'-phosphate decarboxylase (pyrF).